The chain runs to 287 residues: Phosphatidylserine decarboxylase proenzyme (287 aa).

Residues aspartate 90, histidine 147, and serine 252 each act as charge relay system; for autoendoproteolytic cleavage activity in the active site. Serine 252 acts as the Schiff-base intermediate with substrate; via pyruvic acid; for decarboxylase activity in catalysis. Serine 252 is subject to Pyruvic acid (Ser); by autocatalysis.

It belongs to the phosphatidylserine decarboxylase family. PSD-B subfamily. Prokaryotic type I sub-subfamily. Heterodimer of a large membrane-associated beta subunit and a small pyruvoyl-containing alpha subunit. Pyruvate is required as a cofactor. Is synthesized initially as an inactive proenzyme. Formation of the active enzyme involves a self-maturation process in which the active site pyruvoyl group is generated from an internal serine residue via an autocatalytic post-translational modification. Two non-identical subunits are generated from the proenzyme in this reaction, and the pyruvate is formed at the N-terminus of the alpha chain, which is derived from the carboxyl end of the proenzyme. The autoendoproteolytic cleavage occurs by a canonical serine protease mechanism, in which the side chain hydroxyl group of the serine supplies its oxygen atom to form the C-terminus of the beta chain, while the remainder of the serine residue undergoes an oxidative deamination to produce ammonia and the pyruvoyl prosthetic group on the alpha chain. During this reaction, the Ser that is part of the protease active site of the proenzyme becomes the pyruvoyl prosthetic group, which constitutes an essential element of the active site of the mature decarboxylase.

It localises to the cell membrane. It carries out the reaction a 1,2-diacyl-sn-glycero-3-phospho-L-serine + H(+) = a 1,2-diacyl-sn-glycero-3-phosphoethanolamine + CO2. It functions in the pathway phospholipid metabolism; phosphatidylethanolamine biosynthesis; phosphatidylethanolamine from CDP-diacylglycerol: step 2/2. In terms of biological role, catalyzes the formation of phosphatidylethanolamine (PtdEtn) from phosphatidylserine (PtdSer). This Pseudomonas putida (strain ATCC 47054 / DSM 6125 / CFBP 8728 / NCIMB 11950 / KT2440) protein is Phosphatidylserine decarboxylase proenzyme.